Reading from the N-terminus, the 469-residue chain is Sulfate adenylyltransferase subunit 1 (469 aa).

Residues 22 to 237 (KEVLRFITCG…LEEVPVKSEE (216 aa)) form the tr-type G domain. Residues 31 to 38 (GSVDDGKS) form a G1 region. A GTP-binding site is contributed by 31-38 (GSVDDGKS). The interval 89-93 (GITID) is G2. Positions 110-113 (DTPG) are G3. GTP contacts are provided by residues 110–114 (DTPGH) and 165–168 (NKMD). The segment at 165 to 168 (NKMD) is G4. The interval 202-204 (SAK) is G5.

The protein belongs to the TRAFAC class translation factor GTPase superfamily. Classic translation factor GTPase family. CysN/NodQ subfamily. In terms of assembly, heterodimer composed of CysD, the smaller subunit, and CysN.

The enzyme catalyses sulfate + ATP + H(+) = adenosine 5'-phosphosulfate + diphosphate. The protein operates within sulfur metabolism; hydrogen sulfide biosynthesis; sulfite from sulfate: step 1/3. Its function is as follows. With CysD forms the ATP sulfurylase (ATPS) that catalyzes the adenylation of sulfate producing adenosine 5'-phosphosulfate (APS) and diphosphate, the first enzymatic step in sulfur assimilation pathway. APS synthesis involves the formation of a high-energy phosphoric-sulfuric acid anhydride bond driven by GTP hydrolysis by CysN coupled to ATP hydrolysis by CysD. The chain is Sulfate adenylyltransferase subunit 1 from Methylorubrum extorquens (strain PA1) (Methylobacterium extorquens).